The following is a 283-amino-acid chain: Coiled-coil domain-containing protein 107 (283 aa).

The N-terminal stretch at 1-24 (MAGAVSLLGVVGLLLVSALSGVLG) is a signal peptide. The segment at 30 to 62 (DLRAHPGNAAHPGSGATEPRRRPPLKDQRERTR) is disordered. The segment covering 47 to 62 (EPRRRPPLKDQRERTR) has biased composition (basic and acidic residues). A helical membrane pass occupies residues 65 to 85 (SLPLGALYTAAVAAFVLYKCL). Residues 104 to 134 (LQSEQQLAQLTQQLAQTEQHLNNLMAQLDPL) are a coiled coil. 2 disordered regions span residues 164–207 (KPDK…SRPL) and 258–283 (AKGP…SLFS). Residues 176-187 (EGSGGESAGGGD) are compositionally biased toward gly residues.

It is found in the membrane. The chain is Coiled-coil domain-containing protein 107 (CCDC107) from Homo sapiens (Human).